The chain runs to 55 residues: ATP synthase protein 8 (55 aa).

A helical membrane pass occupies residues 8 to 28 (WWIVNFSLIWASVLIVISLLL). The segment at 34–55 (NSAGQSSSSLTLNKTTTNWQWL) is disordered. The segment covering 39 to 55 (SSSSLTLNKTTTNWQWL) has biased composition (low complexity).

It belongs to the ATPase protein 8 family. In terms of assembly, F-type ATPases have 2 components, CF(1) - the catalytic core - and CF(0) - the membrane proton channel.

Its subcellular location is the mitochondrion membrane. Mitochondrial membrane ATP synthase (F(1)F(0) ATP synthase or Complex V) produces ATP from ADP in the presence of a proton gradient across the membrane which is generated by electron transport complexes of the respiratory chain. F-type ATPases consist of two structural domains, F(1) - containing the extramembraneous catalytic core and F(0) - containing the membrane proton channel, linked together by a central stalk and a peripheral stalk. During catalysis, ATP synthesis in the catalytic domain of F(1) is coupled via a rotary mechanism of the central stalk subunits to proton translocation. Part of the complex F(0) domain. Minor subunit located with subunit a in the membrane. This chain is ATP synthase protein 8 (MT-ATP8), found in Strongylocentrotus purpuratus (Purple sea urchin).